The chain runs to 371 residues: Ribosomal RNA small subunit methyltransferase H (371 aa).

Residues 92 to 94 (GGH), Asp-111, Tyr-138, Asp-159, and Gln-166 each bind S-adenosyl-L-methionine.

This sequence belongs to the methyltransferase superfamily. RsmH family.

The protein resides in the cytoplasm. The enzyme catalyses cytidine(1402) in 16S rRNA + S-adenosyl-L-methionine = N(4)-methylcytidine(1402) in 16S rRNA + S-adenosyl-L-homocysteine + H(+). In terms of biological role, specifically methylates the N4 position of cytidine in position 1402 (C1402) of 16S rRNA. This is Ribosomal RNA small subunit methyltransferase H from Mycolicibacterium gilvum (strain PYR-GCK) (Mycobacterium gilvum (strain PYR-GCK)).